We begin with the raw amino-acid sequence, 319 residues long: ADP-L-glycero-D-manno-heptose-6-epimerase (319 aa).

Residues 10–11 (FI), 31–32 (DD), K38, K53, and 79–83 (EGACS) each bind NADP(+). Y144 acts as the Proton acceptor in catalysis. An NADP(+)-binding site is contributed by K148. N173 lines the substrate pocket. NADP(+) contacts are provided by V174 and K182. K182 (proton acceptor) is an active-site residue. Residues S184, H191, 205 to 208 (FEGC), R218, and Y282 contribute to the substrate site.

This sequence belongs to the NAD(P)-dependent epimerase/dehydratase family. HldD subfamily. In terms of assembly, homopentamer. The cofactor is NADP(+).

The enzyme catalyses ADP-D-glycero-beta-D-manno-heptose = ADP-L-glycero-beta-D-manno-heptose. It functions in the pathway nucleotide-sugar biosynthesis; ADP-L-glycero-beta-D-manno-heptose biosynthesis; ADP-L-glycero-beta-D-manno-heptose from D-glycero-beta-D-manno-heptose 7-phosphate: step 4/4. Functionally, catalyzes the interconversion between ADP-D-glycero-beta-D-manno-heptose and ADP-L-glycero-beta-D-manno-heptose via an epimerization at carbon 6 of the heptose. The polypeptide is ADP-L-glycero-D-manno-heptose-6-epimerase (Aeromonas salmonicida (strain A449)).